The chain runs to 454 residues: MNDARSITRRRFMTLTGSGLAMLGGGHAFAQGQPRLRIDPTEFQPVPIAITNFLPGSPSDGDVGNGVTQVITNNLKRSGLFAPIDQAAFIERISNIDVAPQFQNWKTINAQALVTGRMTRQPDGRLKAEFRLWDVVSGQQLAGQQYFTSPEYWRRIAHIISDQIYERMTGEKGYFDSRVVFVDETGPKERRVKRLAMMDQDGANVRYLTRGSDLVLTPRFSPNSQEITYMEFGQGDPKVYLFNIETGQREIVGNFPGMTFAPRFSPDGQRVIMSLQQGGNSNLFVMDLRSRSTTRLTDTPAIDTSPSYSPDGTRICFESDRGGRSQIYVMAAGGGAAQRISFSKDDTNATYSTPVWSPRGDYIAFTRQGGGQFSIGVMKPDGSGERLLTSGFHNEGPTFSPNGRVLMFFRDPGGSGGPSLYSVDISGRNELKVPTPGFASDPAWSPLLSSTAGQ.

Positions 1 to 30 are cleaved as a signal peptide; sequence MNDARSITRRRFMTLTGSGLAMLGGGHAFA.

The protein belongs to the TolB family. In terms of assembly, the Tol-Pal system is composed of five core proteins: the inner membrane proteins TolA, TolQ and TolR, the periplasmic protein TolB and the outer membrane protein Pal. They form a network linking the inner and outer membranes and the peptidoglycan layer.

It is found in the periplasm. Functionally, part of the Tol-Pal system, which plays a role in outer membrane invagination during cell division and is important for maintaining outer membrane integrity. This Bradyrhizobium diazoefficiens (strain JCM 10833 / BCRC 13528 / IAM 13628 / NBRC 14792 / USDA 110) protein is Tol-Pal system protein TolB.